The sequence spans 227 residues: Large ribosomal subunit protein uL3 (227 aa).

N5-methylglutamine is present on glutamine 154.

This sequence belongs to the universal ribosomal protein uL3 family. As to quaternary structure, part of the 50S ribosomal subunit. Forms a cluster with proteins L14 and L19. Methylated by PrmB.

One of the primary rRNA binding proteins, it binds directly near the 3'-end of the 23S rRNA, where it nucleates assembly of the 50S subunit. The protein is Large ribosomal subunit protein uL3 of Acidiphilium cryptum (strain JF-5).